The following is a 336-amino-acid chain: Serpentine receptor class delta-51 (336 aa).

7 consecutive transmembrane segments (helical) span residues 14–34, 48–68, 93–113, 133–153, 188–208, 237–257, and 275–295; these read VYYSLNVTLALSINILLLFIM, YLFNTALFEIIVSLSTYFAQC, CFVTFAVVQCSVVAASFSILL, ATTFIIFSFFPTVMLLFQLLT, AAIIAQSLISLGVYMSPLIAF, GLLIQTLIPFCVYIPPYSYFL, and IFGSFTAFINPLLTFYFVLPY.

It belongs to the nematode receptor-like protein srd family.

The protein resides in the membrane. In Caenorhabditis elegans, this protein is Serpentine receptor class delta-51 (srd-51).